The following is a 215-amino-acid chain: MLQVYLVRHGESEWNAARRIQGQSDSPLTETGEHQARLVAQRVKSESITHIITSDLGRTRRTAEIIAKVCGCEIILEPRLRELHMGVLERRNIDSLTSEEEKWRKKVLDGTPGGRIPKGESMDELAVRMRAALENCRNLPVGSRPLLVSHGIALGCLVGTILGLPAHAERRLRLRNCSLSRVDYQHSPWLASGWIVETAGDITHLDTPALDELQR.

Residues 8 to 15, 21 to 22, Arg58, Arg60, 82 to 85, and 151 to 152 each bind substrate; these read RHGESEWN, QG, ELHM, and GI. The Tele-phosphohistidine intermediate role is filled by His9. Glu82 serves as the catalytic Proton donor/acceptor.

The protein belongs to the phosphoglycerate mutase family. GpmB subfamily.

The enzyme catalyses (2R)-2-phosphoglycerate = (2R)-3-phosphoglycerate. It functions in the pathway carbohydrate degradation; glycolysis; pyruvate from D-glyceraldehyde 3-phosphate: step 3/5. The protein is Probable phosphoglycerate mutase GpmB of Photorhabdus laumondii subsp. laumondii (strain DSM 15139 / CIP 105565 / TT01) (Photorhabdus luminescens subsp. laumondii).